Reading from the N-terminus, the 366-residue chain is 15-cis-zeta-carotene isomerase, chloroplastic (366 aa).

The transit peptide at 1-45 directs the protein to the chloroplast; that stretch reads MASQLRLHLAATPPLLPHRRPHLARPLCPTLNPIRAPLPPLSRVL. The next 6 membrane-spanning stretches (helical) occupy residues 94–114, 136–156, 171–191, 203–223, 260–280, and 338–358; these read SWAY…VLWI, EVVM…MASL, VLFA…FINH, GITG…FFLY, VIWC…AASV, and LPYV…PLMQ.

Expressed in leaves and roots, and at lower levels in embryos and endosperm.

It is found in the plastid. The protein localises to the chloroplast membrane. It carries out the reaction 9,9',15-tri-cis-zeta-carotene = 9,9'-di-cis-zeta-carotene. Isomerase involved in the biosynthesis of carotenoids. Catalyzes the cis- to trans-conversion of the 15-cis-bond in 9,15,9'-tri-cis-zeta-carotene. The sequence is that of 15-cis-zeta-carotene isomerase, chloroplastic from Zea mays (Maize).